A 74-amino-acid chain; its full sequence is Male-specific sperm protein Mst84Db (74 aa).

Belongs to the MST(3)CGP family. As to expression, testis.

The chain is Male-specific sperm protein Mst84Db (Mst84Db) from Drosophila melanogaster (Fruit fly).